A 237-amino-acid chain; its full sequence is tRNA1(Val) (adenine(37)-N6)-methyltransferase (237 aa).

The protein belongs to the methyltransferase superfamily. tRNA (adenine-N(6)-)-methyltransferase family.

The protein resides in the cytoplasm. The enzyme catalyses adenosine(37) in tRNA1(Val) + S-adenosyl-L-methionine = N(6)-methyladenosine(37) in tRNA1(Val) + S-adenosyl-L-homocysteine + H(+). In terms of biological role, specifically methylates the adenine in position 37 of tRNA(1)(Val) (anticodon cmo5UAC). This is tRNA1(Val) (adenine(37)-N6)-methyltransferase from Pasteurella multocida (strain Pm70).